A 137-amino-acid polypeptide reads, in one-letter code: Holo-[acyl-carrier-protein] synthase (137 aa).

D8 and E58 together coordinate Mg(2+).

Belongs to the P-Pant transferase superfamily. AcpS family. It depends on Mg(2+) as a cofactor.

It localises to the cytoplasm. The catalysed reaction is apo-[ACP] + CoA = holo-[ACP] + adenosine 3',5'-bisphosphate + H(+). Transfers the 4'-phosphopantetheine moiety from coenzyme A to a Ser of acyl-carrier-protein. The chain is Holo-[acyl-carrier-protein] synthase from Lactobacillus delbrueckii subsp. bulgaricus (strain ATCC BAA-365 / Lb-18).